Reading from the N-terminus, the 499-residue chain is Glutathione reductase, cytosolic (499 aa).

Ser35, Gly36, Glu55, Thr72, Cys73, and Lys81 together coordinate FAD. Ser35 contributes to the glutathione binding site. A disulfide bond links Cys73 and Cys78. Tyr130 is a glutathione binding site. Gly146 is a binding site for FAD. Residues Gly211, Ile214, Glu217, Arg234, Arg240, and Gly297 each coordinate NADP(+). 2 residues coordinate FAD: Asp338 and Thr346. Ala376 is a binding site for NADP(+). His472 provides a ligand contact to FAD. The active-site Proton acceptor is the His472.

The protein belongs to the class-I pyridine nucleotide-disulfide oxidoreductase family. Homodimer. Requires FAD as cofactor.

Its subcellular location is the cytoplasm. It catalyses the reaction 2 glutathione + NADP(+) = glutathione disulfide + NADPH + H(+). In terms of biological role, catalyzes the reduction of glutathione disulfide (GSSG) to reduced glutathione (GSH). Constitutes the major mechanism to maintain a high GSH:GSSG ratio in the cytosol. The protein is Glutathione reductase, cytosolic of Arabidopsis thaliana (Mouse-ear cress).